Reading from the N-terminus, the 36-residue chain is Hemoglobin subunit beta (36 aa).

One can recognise a Globin domain in the interval 1–36; the sequence is VCVLAHHFGKEFTPQVQAAYQKVVAGVANALAHKYH. Lys-34 bears the N6-acetyllysine mark.

Belongs to the globin family. Heterotetramer of two alpha chains and two beta chains. Red blood cells.

Functionally, involved in oxygen transport from the lung to the various peripheral tissues. The chain is Hemoglobin subunit beta (HBB) from Pongo pygmaeus (Bornean orangutan).